The primary structure comprises 530 residues: Autoinducer-2 kinase (530 aa).

The protein belongs to the FGGY kinase family.

Its subcellular location is the cytoplasm. It carries out the reaction (S)-4,5-dihydroxypentane-2,3-dione + ATP = (2S)-2-hydroxy-3,4-dioxopentyl phosphate + ADP + H(+). Functionally, catalyzes the phosphorylation of autoinducer-2 (AI-2) to phospho-AI-2, which subsequently inactivates the transcriptional regulator LsrR and leads to the transcription of the lsr operon. Phosphorylates the ring-open form of (S)-4,5-dihydroxypentane-2,3-dione (DPD), which is the precursor to all AI-2 signaling molecules, at the C5 position. The chain is Autoinducer-2 kinase from Escherichia coli (strain ATCC 8739 / DSM 1576 / NBRC 3972 / NCIMB 8545 / WDCM 00012 / Crooks).